Here is a 253-residue protein sequence, read N- to C-terminus: HTH-type transcriptional repressor DasR (253 aa).

An HTH gntR-type domain is found at Arg-16–Pro-86. Positions Glu-46 to Gln-65 form a DNA-binding region, H-T-H motif.

It is found in the cytoplasm. Global regulator that is part of the nutrient-sensing system. In the absence of glucosamine 6-P (GlcN6P), represses the phosphotransferase system (PTS) specific for the uptake of N-acetylglucosamine (PTSNag), and genes involved in the metabolism of chitin, as well as several genes involved in development, thereby linking carbon availability to morphogenesis. Regulates the dasABC transport operon involved in glucose-related morphogenesis. Essential for development. The sequence is that of HTH-type transcriptional repressor DasR (dasR) from Streptomyces griseus.